Consider the following 482-residue polypeptide: tRNA sulfurtransferase (482 aa).

The region spanning 61–165 (DQILAILMQT…YDHLHQVLHR (105 aa)) is the THUMP domain. ATP contacts are provided by residues 183–184 (LI), lysine 265, glycine 287, and glutamine 296. An intrachain disulfide couples cysteine 344 to cysteine 456. Positions 404–482 (IGDGAIVLDI…GYGNIKVYRP (79 aa)) constitute a Rhodanese domain. Catalysis depends on cysteine 456, which acts as the Cysteine persulfide intermediate.

The protein belongs to the ThiI family.

It is found in the cytoplasm. The catalysed reaction is [ThiI sulfur-carrier protein]-S-sulfanyl-L-cysteine + a uridine in tRNA + 2 reduced [2Fe-2S]-[ferredoxin] + ATP + H(+) = [ThiI sulfur-carrier protein]-L-cysteine + a 4-thiouridine in tRNA + 2 oxidized [2Fe-2S]-[ferredoxin] + AMP + diphosphate. It catalyses the reaction [ThiS sulfur-carrier protein]-C-terminal Gly-Gly-AMP + S-sulfanyl-L-cysteinyl-[cysteine desulfurase] + AH2 = [ThiS sulfur-carrier protein]-C-terminal-Gly-aminoethanethioate + L-cysteinyl-[cysteine desulfurase] + A + AMP + 2 H(+). The protein operates within cofactor biosynthesis; thiamine diphosphate biosynthesis. In terms of biological role, catalyzes the ATP-dependent transfer of a sulfur to tRNA to produce 4-thiouridine in position 8 of tRNAs, which functions as a near-UV photosensor. Also catalyzes the transfer of sulfur to the sulfur carrier protein ThiS, forming ThiS-thiocarboxylate. This is a step in the synthesis of thiazole, in the thiamine biosynthesis pathway. The sulfur is donated as persulfide by IscS. The protein is tRNA sulfurtransferase of Photobacterium profundum (strain SS9).